We begin with the raw amino-acid sequence, 227 residues long: Phosphoribosylformylglycinamidine synthase subunit PurQ (227 aa).

The region spanning 3–225 is the Glutamine amidotransferase type-1 domain; it reads FAVIVFPGSN…LKQWRETYVV (223 aa). Cysteine 86 functions as the Nucleophile in the catalytic mechanism. Residues histidine 194 and glutamate 196 contribute to the active site.

Part of the FGAM synthase complex composed of 1 PurL, 1 PurQ and 2 PurS subunits.

It localises to the cytoplasm. It carries out the reaction N(2)-formyl-N(1)-(5-phospho-beta-D-ribosyl)glycinamide + L-glutamine + ATP + H2O = 2-formamido-N(1)-(5-O-phospho-beta-D-ribosyl)acetamidine + L-glutamate + ADP + phosphate + H(+). It catalyses the reaction L-glutamine + H2O = L-glutamate + NH4(+). The protein operates within purine metabolism; IMP biosynthesis via de novo pathway; 5-amino-1-(5-phospho-D-ribosyl)imidazole from N(2)-formyl-N(1)-(5-phospho-D-ribosyl)glycinamide: step 1/2. Functionally, part of the phosphoribosylformylglycinamidine synthase complex involved in the purines biosynthetic pathway. Catalyzes the ATP-dependent conversion of formylglycinamide ribonucleotide (FGAR) and glutamine to yield formylglycinamidine ribonucleotide (FGAM) and glutamate. The FGAM synthase complex is composed of three subunits. PurQ produces an ammonia molecule by converting glutamine to glutamate. PurL transfers the ammonia molecule to FGAR to form FGAM in an ATP-dependent manner. PurS interacts with PurQ and PurL and is thought to assist in the transfer of the ammonia molecule from PurQ to PurL. The polypeptide is Phosphoribosylformylglycinamidine synthase subunit PurQ (Bacillus mycoides (strain KBAB4) (Bacillus weihenstephanensis)).